We begin with the raw amino-acid sequence, 239 residues long: Sugar fermentation stimulation protein homolog (239 aa).

The protein belongs to the SfsA family.

This is Sugar fermentation stimulation protein homolog from Maridesulfovibrio salexigens (strain ATCC 14822 / DSM 2638 / NCIMB 8403 / VKM B-1763) (Desulfovibrio salexigens).